The chain runs to 785 residues: Penicillin-binding protein 1A (785 aa).

Over 1-6 (MYKSLF) the chain is Cytoplasmic. A helical; Signal-anchor for type II membrane protein membrane pass occupies residues 7–27 (FFLKIFAILILLGCSVTAYII). Residues 28-785 (YHYSHDLPDY…GISDQSQEIY (758 aa)) lie on the Periplasmic side of the membrane. Residues 49–220 (TRIYSRDGKL…SELNPDKNYS (172 aa)) are transglycosylase. E87 (proton donor; for transglycosylase activity) is an active-site residue. Residues 398 to 711 (DVIVVEPIKD…SNVVLPIFID (314 aa)) are transpeptidase. S457 functions as the Acyl-ester intermediate; for transpeptidase activity in the catalytic mechanism.

The protein in the N-terminal section; belongs to the glycosyltransferase 51 family. This sequence in the C-terminal section; belongs to the transpeptidase family.

It localises to the cell inner membrane. It catalyses the reaction [GlcNAc-(1-&gt;4)-Mur2Ac(oyl-L-Ala-gamma-D-Glu-L-Lys-D-Ala-D-Ala)](n)-di-trans,octa-cis-undecaprenyl diphosphate + beta-D-GlcNAc-(1-&gt;4)-Mur2Ac(oyl-L-Ala-gamma-D-Glu-L-Lys-D-Ala-D-Ala)-di-trans,octa-cis-undecaprenyl diphosphate = [GlcNAc-(1-&gt;4)-Mur2Ac(oyl-L-Ala-gamma-D-Glu-L-Lys-D-Ala-D-Ala)](n+1)-di-trans,octa-cis-undecaprenyl diphosphate + di-trans,octa-cis-undecaprenyl diphosphate + H(+). The catalysed reaction is Preferential cleavage: (Ac)2-L-Lys-D-Ala-|-D-Ala. Also transpeptidation of peptidyl-alanyl moieties that are N-acyl substituents of D-alanine.. It functions in the pathway cell wall biogenesis; peptidoglycan biosynthesis. Functionally, cell wall formation. Synthesis of cross-linked peptidoglycan from the lipid intermediates. The enzyme has a penicillin-insensitive transglycosylase N-terminal domain (formation of linear glycan strands) and a penicillin-sensitive transpeptidase C-terminal domain (cross-linking of the peptide subunits). The protein is Penicillin-binding protein 1A (mrcA) of Rickettsia typhi (strain ATCC VR-144 / Wilmington).